A 453-amino-acid polypeptide reads, in one-letter code: MSPQTETKAGVGFKAGVKEYKLTYYTPEYETKDTDILAAFRVTPQPGVPPEERGAAVAAESSTGTWTTVWTDGLTSLDRYKGRCYHIEPVPGEEDQFIAYVAYPLDLFEEGSVTNMFTSIVGNVFGFKALRALRLEDLRIPVAYVKTFQGPPHGIQVERDKLNKYGRPLLGCTIKPKLGLSAKNYGRAVYECLRGGLDFTKDDENVNSQPFMRWRDRFLFCAEAIYKSQAETGEIKGHYLNATAGTCEEMIKRAVFARELGVPIVMHDYLTGGFTANTSLSHYCRDNGLLLHIHRAMHAVIDRQKNHGMHFRVLAKALRMSGGDHIHSGTVVGKLEGERDITLGFVDLLRDDYIEKDRSRGIYFTQDWVSLPGVLPVASRGIHVWHMPALTEIFGDDSVLQFGGGTLGHPWGNAPGAVANRVALEACVKARNEGRDLAAEGGEIIREACKWSP.

Residues Met1–Ser2 constitute a propeptide that is removed on maturation. An N-acetylproline modification is found at Pro3. Residue Lys14 is modified to N6,N6,N6-trimethyllysine. Residues Asn123 and Thr173 each contribute to the substrate site. Catalysis depends on Lys175, which acts as the Proton acceptor. Lys177 is a substrate binding site. 3 residues coordinate Mg(2+): Lys201, Asp203, and Glu204. Lys201 is modified (N6-carboxylysine). The Proton acceptor role is filled by His294. Residues Arg295, His327, and Ser379 each contribute to the substrate site.

The protein belongs to the RuBisCO large chain family. Type I subfamily. As to quaternary structure, heterohexadecamer of 8 large chains and 8 small chains; disulfide-linked. The disulfide link is formed within the large subunit homodimers. It depends on Mg(2+) as a cofactor. The disulfide bond which can form in the large chain dimeric partners within the hexadecamer appears to be associated with oxidative stress and protein turnover.

The protein resides in the plastid. Its subcellular location is the chloroplast. It catalyses the reaction 2 (2R)-3-phosphoglycerate + 2 H(+) = D-ribulose 1,5-bisphosphate + CO2 + H2O. The enzyme catalyses D-ribulose 1,5-bisphosphate + O2 = 2-phosphoglycolate + (2R)-3-phosphoglycerate + 2 H(+). Functionally, ruBisCO catalyzes two reactions: the carboxylation of D-ribulose 1,5-bisphosphate, the primary event in carbon dioxide fixation, as well as the oxidative fragmentation of the pentose substrate in the photorespiration process. Both reactions occur simultaneously and in competition at the same active site. In Galium palustre (Common marsh bedstraw), this protein is Ribulose bisphosphate carboxylase large chain.